Reading from the N-terminus, the 195-residue chain is MDELRWYHITVCLDHIFGHNCSLSCKDCMNGGKCQEGKSECSCPAGCRVILCNENCLEGAYGAGCTSECQCVEENTLECSAKNGSCTCKSGYQGNRCQKDGLWGPEGWFSSAPCENGGQCNKKTGNCDCTPDYTRKSCTILRCISLTNLALSRRSSPMKYQQNVSSHREVRQRQQCSSDRPFKKLLCKFSFKIGM.

In terms of domain architecture, EGF-like spans 86 to 97 (CTCKSGYQGNRC).

In Homo sapiens (Human), this protein is Putative EGF-like and EMI domain-containing protein 1 (EGFEM1P).